Consider the following 356-residue polypeptide: Protein RecA (356 aa).

78–85 (GPESSGKT) is an ATP binding site.

The protein belongs to the RecA family.

Its subcellular location is the cytoplasm. In terms of biological role, can catalyze the hydrolysis of ATP in the presence of single-stranded DNA, the ATP-dependent uptake of single-stranded DNA by duplex DNA, and the ATP-dependent hybridization of homologous single-stranded DNAs. It interacts with LexA causing its activation and leading to its autocatalytic cleavage. In Paracoccus denitrificans, this protein is Protein RecA.